Reading from the N-terminus, the 95-residue chain is Defensin-like protein 232 (95 aa).

The first 26 residues, 1–26 (MRCTTLIMVSFVVSCLLLSLVEESEA), serve as a signal peptide directing secretion. Cystine bridges form between Cys-33-Cys-94, Cys-43-Cys-68, Cys-51-Cys-84, and Cys-66-Cys-86.

It belongs to the DEFL family. In terms of tissue distribution, flower buds.

It is found in the secreted. This Arabidopsis thaliana (Mouse-ear cress) protein is Defensin-like protein 232 (SCRL23).